The following is a 189-amino-acid chain: GMP synthase [glutamine-hydrolyzing] subunit A (189 aa).

One can recognise a Glutamine amidotransferase type-1 domain in the interval 1–189 (MIVILNNGGQ…CKVCGFKFNE (189 aa)). The Nucleophile role is filled by cysteine 76. Catalysis depends on residues histidine 163 and glutamate 165.

In terms of assembly, heterodimer composed of a glutamine amidotransferase subunit (A) and a GMP-binding subunit (B).

The enzyme catalyses XMP + L-glutamine + ATP + H2O = GMP + L-glutamate + AMP + diphosphate + 2 H(+). Its pathway is purine metabolism; GMP biosynthesis; GMP from XMP (L-Gln route): step 1/1. In terms of biological role, catalyzes the synthesis of GMP from XMP. The chain is GMP synthase [glutamine-hydrolyzing] subunit A from Methanococcus vannielii (strain ATCC 35089 / DSM 1224 / JCM 13029 / OCM 148 / SB).